Consider the following 151-residue polypeptide: MESPVRFEHVDIATILKTLPHRYPFLLIDRVLNIRADHSGIGVKNVTFNEPAFQGHFPERPVYPGVLMIEGMAQTAGVIGIMSVEGTEKPRAVYFLTIDKCKFRKPVMPGDIVEYHMRSIGRRKTMWWFHGDAKVNGTIVAEADVGAMLTD.

H56 is a catalytic residue.

It belongs to the thioester dehydratase family. FabZ subfamily.

The protein resides in the cytoplasm. The catalysed reaction is a (3R)-hydroxyacyl-[ACP] = a (2E)-enoyl-[ACP] + H2O. Involved in unsaturated fatty acids biosynthesis. Catalyzes the dehydration of short chain beta-hydroxyacyl-ACPs and long chain saturated and unsaturated beta-hydroxyacyl-ACPs. The sequence is that of 3-hydroxyacyl-[acyl-carrier-protein] dehydratase FabZ from Nitrobacter winogradskyi (strain ATCC 25391 / DSM 10237 / CIP 104748 / NCIMB 11846 / Nb-255).